The chain runs to 897 residues: Staphylococcal nuclease domain-containing protein 1 (897 aa).

4 TNase-like domains span residues 18-167 (QLQR…LWSE), 194-329 (KPVN…IWKD), 342-499 (RQFV…LHSK), and 528-663 (GRSE…LWAN). Residues 732-790 (APRRGEFCIAKFADGEWYRARVEKVESPAKVHVFYIDYGNREVLSSTRLAALPPAFSTR) enclose the Tudor domain.

The protein resides in the cytoplasm. The polypeptide is Staphylococcal nuclease domain-containing protein 1 (snd1) (Danio rerio (Zebrafish)).